A 277-amino-acid polypeptide reads, in one-letter code: Carbonyl reductase [NADPH] 3 (277 aa).

Residue Ser2 is modified to N-acetylserine. Residues 10 to 34, 38 to 42, 63 to 64, and Asn90 each bind NADP(+); these read VTGA…GDVV, RDEAR, and DI. Phosphoserine is present on Ser30. Ser140 contributes to the substrate binding site. Residue Tyr194 is the Proton acceptor of the active site. Position 194 to 198 (194 to 198) interacts with NADP(+); it reads YGVSK.

Belongs to the short-chain dehydrogenases/reductases (SDR) family.

The protein resides in the cytoplasm. It carries out the reaction a secondary alcohol + NADP(+) = a ketone + NADPH + H(+). The catalysed reaction is a quinone + NADPH + H(+) = a quinol + NADP(+). Functionally, catalyzes the NADPH-dependent reduction of carbonyl compounds to their corresponding alcohols. Has low NADPH-dependent oxidoreductase activity. Acts on several orthoquinones, as well as on non-quinone compounds, such as isatin or on the anticancer drug oracin. Best substrates for CBR3 is 1,2- naphthoquinone, hence could play a role in protection against cytotoxicity of exogenous quinones. Exerts activity toward ortho-quinones but not paraquinones. No endogenous substrate for CBR3 except isatin has been identified. The polypeptide is Carbonyl reductase [NADPH] 3 (Cbr3) (Mus musculus (Mouse)).